A 313-amino-acid polypeptide reads, in one-letter code: Ribosomal RNA small subunit methyltransferase H (313 aa).

S-adenosyl-L-methionine is bound by residues 35–37 (GGH), Asp55, Phe79, Asp101, and Gln108.

The protein belongs to the methyltransferase superfamily. RsmH family.

The protein localises to the cytoplasm. The enzyme catalyses cytidine(1402) in 16S rRNA + S-adenosyl-L-methionine = N(4)-methylcytidine(1402) in 16S rRNA + S-adenosyl-L-homocysteine + H(+). Functionally, specifically methylates the N4 position of cytidine in position 1402 (C1402) of 16S rRNA. This chain is Ribosomal RNA small subunit methyltransferase H, found in Escherichia coli O7:K1 (strain IAI39 / ExPEC).